The primary structure comprises 96 residues: Muconolactone Delta-isomerase (96 aa).

It belongs to the muconolactone Delta-isomerase family. Homodecamer.

The catalysed reaction is (S)-muconolactone = (4,5-dihydro-5-oxofuran-2-yl)-acetate. Its pathway is aromatic compound metabolism; beta-ketoadipate pathway; 5-oxo-4,5-dihydro-2-furylacetate from catechol: step 3/3. The sequence is that of Muconolactone Delta-isomerase (catC) from Acinetobacter baylyi (strain ATCC 33305 / BD413 / ADP1).